Here is a 322-residue protein sequence, read N- to C-terminus: Ig gamma-2A chain C region (322 aa).

Ig-like domains follow at residues 6–98 (PSVY…KKIV), 115–212 (VFIF…KSIS), and 221–317 (PQVY…KSLS). Intrachain disulfides connect cysteine 27–cysteine 82, cysteine 136–cysteine 196, and cysteine 242–cysteine 300. The N-linked (GlcNAc...) asparagine glycan is linked to asparagine 172.

This chain is Ig gamma-2A chain C region (Igg-2a), found in Rattus norvegicus (Rat).